We begin with the raw amino-acid sequence, 476 residues long: 3-isopropylmalate dehydratase large subunit (476 aa).

Cysteine 347, cysteine 407, and cysteine 410 together coordinate [4Fe-4S] cluster. The segment at leucine 418–threonine 442 is disordered.

It belongs to the aconitase/IPM isomerase family. LeuC type 1 subfamily. As to quaternary structure, heterodimer of LeuC and LeuD. Requires [4Fe-4S] cluster as cofactor.

It catalyses the reaction (2R,3S)-3-isopropylmalate = (2S)-2-isopropylmalate. Its pathway is amino-acid biosynthesis; L-leucine biosynthesis; L-leucine from 3-methyl-2-oxobutanoate: step 2/4. Catalyzes the isomerization between 2-isopropylmalate and 3-isopropylmalate, via the formation of 2-isopropylmaleate. The polypeptide is 3-isopropylmalate dehydratase large subunit (Streptomyces coelicolor (strain ATCC BAA-471 / A3(2) / M145)).